A 319-amino-acid polypeptide reads, in one-letter code: Putrescine hydroxycinnamoyltransferase 2 (319 aa).

Residues H160 and D301 each act as proton acceptor in the active site.

It belongs to the plant acyltransferase family.

In terms of biological role, hydroxycinnamoyl transferase that catalyzes the transfer of an acyl from p-coumaryol-CoA to putrescine, to produce coumaroyl putrescine. In Oryza sativa subsp. japonica (Rice), this protein is Putrescine hydroxycinnamoyltransferase 2.